The sequence spans 843 residues: Protein P (843 aa).

The tract at residues 1-177 is terminal protein domain (TP); sequence MPLSYPHFRK…FCGSPYSWEQ (177 aa). The segment at 178–346 is spacer; that stretch reads ELQHGSTSIN…YCLSHIINLL (169 aa). Disordered stretches follow at residues 202 to 221 and 285 to 310; these read SGILSRPSAGSSIQGKFQQS and TNPSLSTSKRHSSTGHAVELHSVPPG. The tract at residues 347–690 is polymerase/reverse transcriptase domain (RT); that stretch reads EDWGPCYEHG…YMNLYPVARQ (344 aa). Residues 357 to 600 enclose the Reverse transcriptase domain; sequence QHHIRTPRTP…YTLNFMGYVI (244 aa). Mg(2+) contacts are provided by Asp429, Asp551, and Asp552.

The protein belongs to the hepadnaviridae P protein family.

The catalysed reaction is DNA(n) + a 2'-deoxyribonucleoside 5'-triphosphate = DNA(n+1) + diphosphate. It carries out the reaction Endonucleolytic cleavage to 5'-phosphomonoester.. Activated by host HSP70 and HSP40 in vitro to be able to bind the epsilon loop of the pgRNA. Because deletion of the RNase H region renders the protein partly chaperone-independent, the chaperones may be needed indirectly to relieve occlusion of the RNA-binding site by this domain. Inhibited by several reverse-transcriptase inhibitors: Lamivudine, Adefovir and Entecavir. Multifunctional enzyme that converts the viral RNA genome into dsDNA in viral cytoplasmic capsids. This enzyme displays a DNA polymerase activity that can copy either DNA or RNA templates, and a ribonuclease H (RNase H) activity that cleaves the RNA strand of RNA-DNA heteroduplexes in a partially processive 3'- to 5'-endonucleasic mode. Neo-synthesized pregenomic RNA (pgRNA) are encapsidated together with the P protein, and reverse-transcribed inside the nucleocapsid. Initiation of reverse-transcription occurs first by binding the epsilon loop on the pgRNA genome, and is initiated by protein priming, thereby the 5'-end of (-)DNA is covalently linked to P protein. Partial (+)DNA is synthesized from the (-)DNA template and generates the relaxed circular DNA (RC-DNA) genome. After budding and infection, the RC-DNA migrates in the nucleus, and is converted into a plasmid-like covalently closed circular DNA (cccDNA). The activity of P protein does not seem to be necessary for cccDNA generation, and is presumably released from (+)DNA by host nuclear DNA repair machinery. The sequence is that of Protein P from Hepatitis B virus genotype F1 (isolate Argentina/sa11/2000) (HBV-F).